Consider the following 53-residue polypeptide: Large ribosomal subunit protein bL32c (53 aa).

The tract at residues 1-21 (MAVPKKRTSKSKKKSRRSHWI) is disordered.

This sequence belongs to the bacterial ribosomal protein bL32 family.

The protein resides in the plastid. Its subcellular location is the chloroplast. The protein is Large ribosomal subunit protein bL32c (rpl32) of Cyanidium caldarium (Red alga).